Here is a 124-residue protein sequence, read N- to C-terminus: Small ribosomal subunit protein uS12 (124 aa).

Position 89 is a 3-methylthioaspartic acid (D89). The disordered stretch occupies residues 105–124; that stretch reads AGVKDRRQSRSKYGAKRPKA. Basic residues predominate over residues 113-124; the sequence is SRSKYGAKRPKA.

This sequence belongs to the universal ribosomal protein uS12 family. Part of the 30S ribosomal subunit. Contacts proteins S8 and S17. May interact with IF1 in the 30S initiation complex.

With S4 and S5 plays an important role in translational accuracy. Its function is as follows. Interacts with and stabilizes bases of the 16S rRNA that are involved in tRNA selection in the A site and with the mRNA backbone. Located at the interface of the 30S and 50S subunits, it traverses the body of the 30S subunit contacting proteins on the other side and probably holding the rRNA structure together. The combined cluster of proteins S8, S12 and S17 appears to hold together the shoulder and platform of the 30S subunit. The protein is Small ribosomal subunit protein uS12 (rpsL) of Synechococcus elongatus (strain ATCC 33912 / PCC 7942 / FACHB-805) (Anacystis nidulans R2).